We begin with the raw amino-acid sequence, 364 residues long: Dual-specificity RNA methyltransferase RlmN (364 aa).

The active-site Proton acceptor is the E91. In terms of domain architecture, Radical SAM core spans 97 to 333 (ESDRGTLCIS…VTVRKTRGDD (237 aa)). A disulfide bridge links C104 with C338. C111, C115, and C118 together coordinate [4Fe-4S] cluster. Residues 164-165 (GE), S196, 218-220 (SLH), and N295 each bind S-adenosyl-L-methionine. C338 acts as the S-methylcysteine intermediate in catalysis.

Belongs to the radical SAM superfamily. RlmN family. The cofactor is [4Fe-4S] cluster.

The protein localises to the cytoplasm. The enzyme catalyses adenosine(2503) in 23S rRNA + 2 reduced [2Fe-2S]-[ferredoxin] + 2 S-adenosyl-L-methionine = 2-methyladenosine(2503) in 23S rRNA + 5'-deoxyadenosine + L-methionine + 2 oxidized [2Fe-2S]-[ferredoxin] + S-adenosyl-L-homocysteine. It catalyses the reaction adenosine(37) in tRNA + 2 reduced [2Fe-2S]-[ferredoxin] + 2 S-adenosyl-L-methionine = 2-methyladenosine(37) in tRNA + 5'-deoxyadenosine + L-methionine + 2 oxidized [2Fe-2S]-[ferredoxin] + S-adenosyl-L-homocysteine. Specifically methylates position 2 of adenine 2503 in 23S rRNA and position 2 of adenine 37 in tRNAs. m2A2503 modification seems to play a crucial role in the proofreading step occurring at the peptidyl transferase center and thus would serve to optimize ribosomal fidelity. The polypeptide is Dual-specificity RNA methyltransferase RlmN (Neisseria meningitidis serogroup B (strain ATCC BAA-335 / MC58)).